Consider the following 607-residue polypeptide: Albumin B (607 aa).

A signal peptide spans 1–18 (MKWITLICLLISSSFIES). Positions 19–24 (RILFKR) are excised as a propeptide. Albumin domains follow at residues 22–209 (FKRD…KQLM), 210–402 (KQSH…RFMN), and 403–600 (EAKE…VLIE). His-30 contacts Cu cation. Disulfide bonds link Cys-80/Cys-88, Cys-101/Cys-117, Cys-116/Cys-127, Cys-147/Cys-192, Cys-191/Cys-200, Cys-223/Cys-269, Cys-268/Cys-276, Cys-288/Cys-302, Cys-301/Cys-312, Cys-339/Cys-384, Cys-383/Cys-392, Cys-415/Cys-461, Cys-460/Cys-471, Cys-484/Cys-500, Cys-499/Cys-510, Cys-537/Cys-582, and Cys-581/Cys-590.

The protein belongs to the ALB/AFP/VDB family. Plasma.

It is found in the secreted. In terms of biological role, serum albumin, the main protein of plasma, has a good binding capacity for water, Ca(2+), Na(+), K(+), fatty acids, hormones, bilirubin and drugs. Its main function is the regulation of the colloidal osmotic pressure of blood. In Xenopus laevis (African clawed frog), this protein is Albumin B (alb-b).